Reading from the N-terminus, the 134-residue chain is D-ribose pyranase (134 aa).

The active-site Proton donor is histidine 20. Substrate-binding positions include aspartate 28, histidine 101, and 123-125 (YCN).

It belongs to the RbsD / FucU family. RbsD subfamily. As to quaternary structure, homodecamer.

It is found in the cytoplasm. It carries out the reaction beta-D-ribopyranose = beta-D-ribofuranose. The protein operates within carbohydrate metabolism; D-ribose degradation; D-ribose 5-phosphate from beta-D-ribopyranose: step 1/2. Its function is as follows. Catalyzes the interconversion of beta-pyran and beta-furan forms of D-ribose. This Pseudomonas fluorescens (strain SBW25) protein is D-ribose pyranase.